Consider the following 540-residue polypeptide: Probable feruloyl esterase B-1 (540 aa).

The signal sequence occupies residues 1–18; it reads MLVMQLLLPFLASTAAAA. N-linked (GlcNAc...) asparagine glycosylation is found at asparagine 28, asparagine 49, asparagine 66, asparagine 95, asparagine 113, and asparagine 195. Intrachain disulfides connect cysteine 41/cysteine 90 and cysteine 76/cysteine 129. Intrachain disulfides connect cysteine 202–cysteine 458, cysteine 271–cysteine 288, and cysteine 297–cysteine 308. Serine 203 serves as the catalytic Acyl-ester intermediate. Asparagine 234 carries N-linked (GlcNAc...) asparagine glycosylation. Ca(2+) is bound by residues aspartate 272, aspartate 275, alanine 277, aspartate 279, and isoleucine 281. Residues asparagine 298, asparagine 328, and asparagine 367 are each glycosylated (N-linked (GlcNAc...) asparagine). Residues aspartate 417 and histidine 457 each act as charge relay system in the active site. Residue asparagine 506 is glycosylated (N-linked (GlcNAc...) asparagine). The cysteines at positions 517 and 539 are disulfide-linked.

This sequence belongs to the tannase family. Homodimer.

The protein resides in the secreted. It catalyses the reaction feruloyl-polysaccharide + H2O = ferulate + polysaccharide.. Involved in degradation of plant cell walls. Hydrolyzes the feruloyl-arabinose ester bond in arabinoxylans as well as the feruloyl-galactose and feruloyl-arabinose ester bonds in pectin. The sequence is that of Probable feruloyl esterase B-1 (faeB-1) from Aspergillus oryzae (strain ATCC 42149 / RIB 40) (Yellow koji mold).